Reading from the N-terminus, the 328-residue chain is Biotin synthase (328 aa).

Residues 41 to 260 enclose the Radical SAM core domain; it reads TAIETASLLS…VALARILMPA (220 aa). [4Fe-4S] cluster contacts are provided by Cys56, Cys60, and Cys63. [2Fe-2S] cluster contacts are provided by Cys100, Cys131, Cys191, and Arg264.

Belongs to the radical SAM superfamily. Biotin synthase family. Homodimer. The cofactor is [4Fe-4S] cluster. It depends on [2Fe-2S] cluster as a cofactor.

The enzyme catalyses (4R,5S)-dethiobiotin + (sulfur carrier)-SH + 2 reduced [2Fe-2S]-[ferredoxin] + 2 S-adenosyl-L-methionine = (sulfur carrier)-H + biotin + 2 5'-deoxyadenosine + 2 L-methionine + 2 oxidized [2Fe-2S]-[ferredoxin]. The protein operates within cofactor biosynthesis; biotin biosynthesis; biotin from 7,8-diaminononanoate: step 2/2. Functionally, catalyzes the conversion of dethiobiotin (DTB) to biotin by the insertion of a sulfur atom into dethiobiotin via a radical-based mechanism. The protein is Biotin synthase of Cereibacter sphaeroides (strain ATCC 17029 / ATH 2.4.9) (Rhodobacter sphaeroides).